The primary structure comprises 63 residues: Protein D-63 (63 aa).

Homodimer.

In terms of biological role, this protein may be involved in virus assembly. This Saccharolobus solfataricus (Sulfolobus solfataricus) protein is Protein D-63.